A 622-amino-acid chain; its full sequence is MPRLEQRFDYVKVSLASPERIIQWGQRTLPNGQVVGEVTKPETINYRTLKPEMDGLFCERIFGPAKDWECHCGKYKRVRHRGIVCERCGVEVTESRVRRHRMGYIKLAAPVTHVWYLKGIPSYMAILLDMPLRDVEQIVYFNSYVVLDPGNHPGLSYKQLLSEDQWQDIEEEIYREDSELEGVEVGIGAEAIQRLLRDLDLQAEADQLRQEILNSKGQKRAKLIKRLRVIDNFIATGAKPEWMVLTVIPVIPPDLRPMVQLDGGRFATSDLNDLYRRVINRNNRLARLQEILAPEIIVRNEKRMLQEAVDALIDNGRRGRTVVGANNRPLKSLSDIIEGKQGRFRQNLLGKRVDYSGRSVIVVGPKLQMHQCGLPREMAIELFQPFVIHRLIRQQIVNNIKAAKRMIQRNDPQIWDVLEEVIEGHPVLLNRAPTLHRLGIQAFEPILVEGRAIQLHPLVCPAFNADFDGDQMAVHVPLSIEAQAEARMLMLASNNILSPATGKPIITPSQDMVLGCYYLTAENPKLPDYSDRYYANFQDVVMAYEQGHLPLHAFVWVRYDGEVDDGDTSEPQITTYEDGSRLLEYALRRVKEDANGQRISQYIRTTPGRIIYNQTIQEALAS.

Residues cysteine 70, cysteine 72, cysteine 85, and cysteine 88 each coordinate Zn(2+). Positions 466, 468, and 470 each coordinate Mg(2+).

This sequence belongs to the RNA polymerase beta' chain family. RpoC1 subfamily. In terms of assembly, in cyanobacteria the RNAP catalytic core is composed of 2 alpha, 1 beta, 1 beta', 1 gamma and 1 omega subunit. When a sigma factor is associated with the core the holoenzyme is formed, which can initiate transcription. Mg(2+) serves as cofactor. It depends on Zn(2+) as a cofactor.

It catalyses the reaction RNA(n) + a ribonucleoside 5'-triphosphate = RNA(n+1) + diphosphate. In terms of biological role, DNA-dependent RNA polymerase catalyzes the transcription of DNA into RNA using the four ribonucleoside triphosphates as substrates. This Thermosynechococcus vestitus (strain NIES-2133 / IAM M-273 / BP-1) protein is DNA-directed RNA polymerase subunit gamma.